Consider the following 2690-residue polypeptide: Probable polyketide synthase 28 (2690 aa).

The Ketosynthase family 3 (KS3) domain maps to 15–443 (YGDVAVIGIG…GSNVCLILSE (429 aa)). Residues Cys-187, His-326, and His-366 each act as for beta-ketoacyl synthase activity in the active site. The acyl/malonyl transferases stretch occupies residues 651 to 684 (GVSADIIVGHSLGELSSSYSSGMIDFETLCHLIY). The active-site For acyl/malonyl transferase activity is the Ser-661. The stretch at 906-934 (NFKSQLTNINNNNNNINNNNNNNNNNNNN) forms a coiled coil. The segment at 916 to 946 (NNNNNINNNNNNNNNNNNNNNNNNNNNNNNN) is disordered. The tract at residues 973–1102 (HEKITNEGPS…GNFSLFKHNS (130 aa)) is N-terminal hotdog fold. The PKS/mFAS DH domain maps to 973-1285 (HEKITNEGPS…CSSVSLANPS (313 aa)). His-1014 (proton acceptor; for dehydratase activity) is an active-site residue. The tract at residues 1119–1285 (NFTTISKHDF…CSSVSLANPS (167 aa)) is C-terminal hotdog fold. The active-site Proton donor; for dehydratase activity is Asp-1188. Residues 1401-1429 (LNHHNNSENKNKNNNNNNNSNNNENSNNE) are disordered. Residues 1412-1429 (KNNNNNNNSNNNENSNNE) show a composition bias toward low complexity. One can recognise a Carrier domain in the interval 2594-2671 (SDNEFIHSTI…QSIDIIKFGY (78 aa)). Ser-2631 is subject to O-(pantetheine 4'-phosphoryl)serine.

Requires pantetheine 4'-phosphate as cofactor.

In terms of biological role, probable polyketide synthase. This is Probable polyketide synthase 28 (pks28) from Dictyostelium discoideum (Social amoeba).